A 679-amino-acid chain; its full sequence is Translation initiation factor IF-2 (679 aa).

The tr-type G domain occupies 178–347 (KRPPIITVMG…LLTSEMQELK (170 aa)). The G1 stretch occupies residues 187-194 (GHVDHGKT). 187 to 194 (GHVDHGKT) lines the GTP pocket. Residues 212–216 (GITQH) are G2. The G3 stretch occupies residues 233–236 (DTPG). GTP-binding positions include 233–237 (DTPGH) and 287–290 (NKMD). A G4 region spans residues 287–290 (NKMD). A G5 region spans residues 323 to 325 (SAK).

The protein belongs to the TRAFAC class translation factor GTPase superfamily. Classic translation factor GTPase family. IF-2 subfamily.

The protein localises to the cytoplasm. Functionally, one of the essential components for the initiation of protein synthesis. Protects formylmethionyl-tRNA from spontaneous hydrolysis and promotes its binding to the 30S ribosomal subunits. Also involved in the hydrolysis of GTP during the formation of the 70S ribosomal complex. The polypeptide is Translation initiation factor IF-2 (Clostridium perfringens (strain ATCC 13124 / DSM 756 / JCM 1290 / NCIMB 6125 / NCTC 8237 / Type A)).